The chain runs to 245 residues: Acetylglutamate kinase (245 aa).

Substrate-binding positions include 41–42 (GG), arginine 63, and asparagine 156.

It belongs to the acetylglutamate kinase family. ArgB subfamily.

Its subcellular location is the cytoplasm. It carries out the reaction N-acetyl-L-glutamate + ATP = N-acetyl-L-glutamyl 5-phosphate + ADP. Its pathway is amino-acid biosynthesis; L-arginine biosynthesis; N(2)-acetyl-L-ornithine from L-glutamate: step 2/4. Its function is as follows. Catalyzes the ATP-dependent phosphorylation of N-acetyl-L-glutamate. In Streptococcus mutans serotype c (strain ATCC 700610 / UA159), this protein is Acetylglutamate kinase.